The primary structure comprises 388 residues: Succinate--CoA ligase [ADP-forming] subunit beta (388 aa).

The ATP-grasp domain occupies 9–244; the sequence is KEILRKFGVA…LDEEDPAEIE (236 aa). Residues K46, 53–55, E99, A102, and E107 contribute to the ATP site; that span reads GRG. Mg(2+) is bound by residues N199 and D213. Substrate contacts are provided by residues N264 and 321–323; that span reads GIM.

It belongs to the succinate/malate CoA ligase beta subunit family. Heterotetramer of two alpha and two beta subunits. It depends on Mg(2+) as a cofactor.

The enzyme catalyses succinate + ATP + CoA = succinyl-CoA + ADP + phosphate. It catalyses the reaction GTP + succinate + CoA = succinyl-CoA + GDP + phosphate. Its pathway is carbohydrate metabolism; tricarboxylic acid cycle; succinate from succinyl-CoA (ligase route): step 1/1. Functionally, succinyl-CoA synthetase functions in the citric acid cycle (TCA), coupling the hydrolysis of succinyl-CoA to the synthesis of either ATP or GTP and thus represents the only step of substrate-level phosphorylation in the TCA. The beta subunit provides nucleotide specificity of the enzyme and binds the substrate succinate, while the binding sites for coenzyme A and phosphate are found in the alpha subunit. This is Succinate--CoA ligase [ADP-forming] subunit beta from Burkholderia multivorans (strain ATCC 17616 / 249).